A 425-amino-acid polypeptide reads, in one-letter code: Serine--tRNA ligase (425 aa).

Residue 230-232 participates in L-serine binding; it reads TSE. ATP is bound at residue 261 to 263; sequence RKE. E284 contributes to the L-serine binding site. 348 to 351 provides a ligand contact to ATP; it reads EISS. Residue S385 coordinates L-serine.

It belongs to the class-II aminoacyl-tRNA synthetase family. Type-1 seryl-tRNA synthetase subfamily. Homodimer. The tRNA molecule binds across the dimer.

It localises to the cytoplasm. The catalysed reaction is tRNA(Ser) + L-serine + ATP = L-seryl-tRNA(Ser) + AMP + diphosphate + H(+). It carries out the reaction tRNA(Sec) + L-serine + ATP = L-seryl-tRNA(Sec) + AMP + diphosphate + H(+). The protein operates within aminoacyl-tRNA biosynthesis; selenocysteinyl-tRNA(Sec) biosynthesis; L-seryl-tRNA(Sec) from L-serine and tRNA(Sec): step 1/1. In terms of biological role, catalyzes the attachment of serine to tRNA(Ser). Is also able to aminoacylate tRNA(Sec) with serine, to form the misacylated tRNA L-seryl-tRNA(Sec), which will be further converted into selenocysteinyl-tRNA(Sec). This chain is Serine--tRNA ligase, found in Wolbachia pipientis wMel.